A 70-amino-acid chain; its full sequence is MNNQKKIKCPICGKQNTWRPDNQFRPFCSERCKLIDLGEWASESRKIPGSSIDPESIVTTNNKQDNVDEQ.

Zn(2+) is bound by residues Cys9, Cys12, Cys28, and Cys32. The tract at residues 43–70 (ESRKIPGSSIDPESIVTTNNKQDNVDEQ) is disordered.

This sequence belongs to the DNA gyrase inhibitor YacG family. Interacts with GyrB. Requires Zn(2+) as cofactor.

In terms of biological role, inhibits all the catalytic activities of DNA gyrase by preventing its interaction with DNA. Acts by binding directly to the C-terminal domain of GyrB, which probably disrupts DNA binding by the gyrase. The protein is DNA gyrase inhibitor YacG of Legionella pneumophila (strain Corby).